A 255-amino-acid chain; its full sequence is 5-oxoprolinase subunit A (255 aa).

This sequence belongs to the LamB/PxpA family. As to quaternary structure, forms a complex composed of PxpA, PxpB and PxpC.

It carries out the reaction 5-oxo-L-proline + ATP + 2 H2O = L-glutamate + ADP + phosphate + H(+). Its function is as follows. Catalyzes the cleavage of 5-oxoproline to form L-glutamate coupled to the hydrolysis of ATP to ADP and inorganic phosphate. The polypeptide is 5-oxoprolinase subunit A (Clostridium kluyveri (strain ATCC 8527 / DSM 555 / NBRC 12016 / NCIMB 10680 / K1)).